The sequence spans 221 residues: Vesicle-associated membrane protein 722 (221 aa).

The Cytoplasmic segment spans residues 1–196 (MAQQSLIYSF…MWFQNMKIKL (196 aa)). The Longin domain occupies 10–114 (FVARGTVILV…SLNKEFGSKL (105 aa)). The region spanning 130–190 (KLAKVKAQVS…TQMRRKMWFQ (61 aa)) is the v-SNARE coiled-coil homology domain. The helical; Anchor for type IV membrane protein transmembrane segment at 197–217 (IVLAIIIALILIIILSICGGF) threads the bilayer. Residues 218–221 (NCGK) lie on the Vesicular side of the membrane.

This sequence belongs to the synaptobrevin family. As to expression, highly expressed in stems and roots. Detected in flowers and leaves.

It localises to the cell membrane. The protein localises to the early endosome membrane. Its function is as follows. Involved in the targeting and/or fusion of transport vesicles to their target membrane. The sequence is that of Vesicle-associated membrane protein 722 from Arabidopsis thaliana (Mouse-ear cress).